Reading from the N-terminus, the 2151-residue chain is MLSSGVETQPVPLDSSMSAVVQELYSELPVSVSRELHADPEPSVIPDVKPGASSSLLSQNRALPLELQRTHVESCCEETYETLDHGSEPGRCGLVDSTAGGSVASGILDRAKRSESMEPKVFRDPGGQAGIIREPSEGAKEDPHQHSTAAEEKTSPSQEDLLMQSSKELSHVDLPEDFLRSKEGNVQITAETLLKSAEVQGMKVNGTKTDNNEGHKNGNVSKDLSAGCGEFQEVDKIMTSDEVSETSTLVTPEPLTFVDPVLTEATPKEKECEELKSCPWLSLPGNSAISNVDNGKEELCKPNLVCEADDNHQQLHGHHNEQPSSTHDSPTATSPLKENSEVSCFTSDLSGPESRTISLENCGFEGGGLLKRSAEKTDSSYFYRGDDQGKNLASREENEERLLIPRSERGGPFLFNAREPEKEISGRCSGEKEPVVSPKENIHNNCIQDSLHTGNSSSLMPNSFTEATEVMLNKNDLKITVHVQGNLTNPEDHKETFTNMSHPGGHSEESSFSSLMQIEEAGQTTPVEPNILSKSFYTKDCNSLVSIQRNLEGNTQLNEASCNDFLFERKSIVSLMPEDQISPVSEVLKPKQGTALLLPSPEFDYRPESEKVIQTSHDDIPLLDEQSIACEMNELSCTNELVVNKVESECVLNQQVSLNSQEHANLPTDSLLHLNKEMPLATGRDAHQSHHPPLEGRADVIADIQTIPIQTKIKDISPPGNQTCGASSNCPTLNIKPVSLERKKEMADSGTKALHSRLRSNKREAAGFPQVVSVIECHSVQSQDISSCHRVRKNVSQENMCSASAAFKSSKISLQVDNSLITKYENAFQHRDHCCQGTGHSVEKSSCKVSYTSQERELDGKETNGSLPGDKIRNKMVAGLLNSGISNKTIHTSSSIKLSEEGLEGKEQDVSKETVFCKYNISDHAIQELNQTVNIPGPEKVLDQSPTVMFSSFKNVKSVETLDQKADEVLDCQSNQNRPDECKSEGQSAKEMLSSDQRETVTEPHGEVNHNQKDLLVSSGSNNSLPCGSPKKCNLKGAFVKMSGCDESTEGMVDIVYTDCSNKLAEGVLDVKASNLLDCGARQEKLAFQEDSRSTLSRRELDAAHTGTTGQDSDFPVTAASTVDFLKIKKSCEENVCRSLKDCEMEKCPDSCAHEMESVADHEPNKRILGRVNLSLNDSHYGQQDKGTSLRETQEMTEGSRLEPNSEFGKESTFGISSKESMSCHDESSVSLRSLKSIEIMPSQENSETNVNSEETDLKNLCKPKDGEMLCENVKDCTVLPEMKEIVSRDWSNSSDRDSVCTCVEKNACKACHPHENSSDRHLPLTVKTDIKVKGEETEEHQRGRLGYLTVGEQSEELVTRETGDGDPVSNISQTHFKCRGILNHAEKQQSPEVLDYMLQKEEKYIRQQKAHTISQQCISSSLLLDDAQNQNQPKADKDESTMINEITLAKLAKDSIVAQTQKLEDQKEERLHHPLRKDTESCTSPCLLGAPRKAQDPSSAGCDQIHGAFAKKGVLPLKKQPHRTCKKVSYQEQIIVGRKIGKIRSSAFLKSSSNPIPTKAHRLLSLCTLSAPTRLEPETAPTKSLVSHIPKQMSTPCHPLRSLNFRKTTKESALLNKLSILASKLAPAMKTQKLRYRRCSSELLPMAKSYKRLRYKRLLDGFSSSTEQLNPYLAASGWDKRPNSKPMALYSLESIKMTFIDLSNKMPSLLFGSEIFPVSFHVKSSSSDCTTESSRTFPEHCAPARLALGEALQCPSQPPKWTFSFFLSHGCPGMATFREDTGVHSQTHTQAPPQPPAPLQDYGGTAIVQTRADCSVLGLHTLLALCSPGCYRIWTKKRSFSSHMPTMQRLFMTQFTQGLKGLRSPASIADKVFCSLPYSVGRVLSIWSQHGPSVCSFEISSLHSPHCKRQPSLGTTSSHTMLPYVPLPGMEATYNTSGSQTRLEPPFPALVPKSCLVAESAVSKLLLSASEFQVRGLDELDGVKAACPCPQSSPPEQKEAEPEKRPKKVSQIRIRKTIPRPDPNLTPMGLPRPKRLKKKEFSLEEIYTNKNYKSPPANRCLETIFEEPKERNGTLISISQQKRKRVLEFQDFTVPRKRRARGKVKVAGSFTRAQKAAVQSRELDALLIQKLMELETFFAKEEEQEQSSGC.

Basic and acidic residues-rich tracts occupy residues 112–123 (KRSESMEPKVFR) and 134–154 (EPSEGAKEDPHQHSTAAEEKT). Disordered stretches follow at residues 112-160 (KRSE…SQED), 206-225 (GTKTDNNEGHKNGNVSKDLS), and 314-350 (QLHGHHNEQPSSTHDSPTATSPLKENSEVSCFTSDLS). The residue at position 157 (S157) is a Phosphoserine. Positions 322–350 (QPSSTHDSPTATSPLKENSEVSCFTSDLS) are enriched in polar residues. Phosphoserine occurs at positions 582 and 945. A disordered region spans residues 974–1017 (SNQNRPDECKSEGQSAKEMLSSDQRETVTEPHGEVNHNQKDLLV). Basic and acidic residues predominate over residues 996-1013 (DQRETVTEPHGEVNHNQK). At S1029 the chain carries Phosphoserine. Residues 1091–1103 (DSRSTLSRRELDA) show a composition bias toward basic and acidic residues. Disordered regions lie at residues 1091–1115 (DSRSTLSRRELDAAHTGTTGQDSDF), 1178–1226 (DSHY…SCHD), 1782–1802 (TGVHSQTHTQAPPQPPAPLQD), and 1986–2012 (AACPCPQSSPPEQKEAEPEKRPKKVSQ). A compositionally biased stretch (polar residues) spans 1178-1187 (DSHYGQQDKG). Over residues 1188–1201 (TSLRETQEMTEGSR) the composition is skewed to basic and acidic residues.

This chain is Protein PRR14L (PRR14L), found in Homo sapiens (Human).